Consider the following 392-residue polypeptide: Formate-dependent phosphoribosylglycinamide formyltransferase (392 aa).

Residues 15–16 (EL) and E75 contribute to the N(1)-(5-phospho-beta-D-ribosyl)glycinamide site. ATP contacts are provided by residues R107, K148, 153 to 158 (SSGKGQ), 188 to 191 (EEFL), and E196. The 191-residue stretch at 112–302 (DLASEELALL…EFELHLRAVL (191 aa)) folds into the ATP-grasp domain. 2 residues coordinate Mg(2+): E261 and E273. N(1)-(5-phospho-beta-D-ribosyl)glycinamide is bound by residues D280, K350, and 357-358 (RR).

It belongs to the PurK/PurT family. In terms of assembly, homodimer.

It carries out the reaction N(1)-(5-phospho-beta-D-ribosyl)glycinamide + formate + ATP = N(2)-formyl-N(1)-(5-phospho-beta-D-ribosyl)glycinamide + ADP + phosphate + H(+). Its pathway is purine metabolism; IMP biosynthesis via de novo pathway; N(2)-formyl-N(1)-(5-phospho-D-ribosyl)glycinamide from N(1)-(5-phospho-D-ribosyl)glycinamide (formate route): step 1/1. In terms of biological role, involved in the de novo purine biosynthesis. Catalyzes the transfer of formate to 5-phospho-ribosyl-glycinamide (GAR), producing 5-phospho-ribosyl-N-formylglycinamide (FGAR). Formate is provided by PurU via hydrolysis of 10-formyl-tetrahydrofolate. This chain is Formate-dependent phosphoribosylglycinamide formyltransferase, found in Prochlorococcus marinus (strain MIT 9303).